A 293-amino-acid polypeptide reads, in one-letter code: Proximal tail tube connector protein (293 aa).

A disordered region spans residues 104-240; sequence TRLNTTGNKK…NANTTTNDKL (137 aa). 3 stretches are compositionally biased toward basic and acidic residues: residues 112–123, 130–140, and 162–173; these read KKNDTERNDNRD, ADGKSNTKTSD, and NFNRKIDSDQPD. Over residues 174–184 the composition is skewed to polar residues; the sequence is SRLNLTTNDGQ. The segment covering 196-238 has biased composition (low complexity); the sequence is NNTNNKRNTTGTNNVTSSAESESTGSGTSDTVTTDNANTTTND.

This sequence belongs to the phi29likevirus proximal tail tube connector protein family.

Its subcellular location is the virion. Its function is as follows. Forms the proximal part of the tail tube. This chain is Proximal tail tube connector protein (11), found in Bacillus subtilis (Bacteriophage B103).